Consider the following 417-residue polypeptide: mRNA cap guanine-N(7) methyltransferase (417 aa).

One can recognise an mRNA cap 0 methyltransferase domain in the interval 129–412 (SPIIKLRNFN…LYTVFAFKKV (284 aa)). Position 138-139 (138-139 (NN)) interacts with mRNA. S-adenosyl-L-methionine contacts are provided by Lys-142, Gly-160, Asp-182, Asp-211, Gln-237, and Tyr-242.

Belongs to the class I-like SAM-binding methyltransferase superfamily. mRNA cap 0 methyltransferase family.

Its subcellular location is the nucleus. The enzyme catalyses a 5'-end (5'-triphosphoguanosine)-ribonucleoside in mRNA + S-adenosyl-L-methionine = a 5'-end (N(7)-methyl 5'-triphosphoguanosine)-ribonucleoside in mRNA + S-adenosyl-L-homocysteine. Its function is as follows. Responsible for methylating the 5'-cap structure of mRNAs. The chain is mRNA cap guanine-N(7) methyltransferase (ABD1) from Candida glabrata (strain ATCC 2001 / BCRC 20586 / JCM 3761 / NBRC 0622 / NRRL Y-65 / CBS 138) (Yeast).